We begin with the raw amino-acid sequence, 310 residues long: 4-diphosphocytidyl-2-C-methyl-D-erythritol kinase (310 aa).

The active site involves Lys20. 106–116 (PMGGGLGGGSS) is a binding site for ATP. Asp148 is a catalytic residue.

This sequence belongs to the GHMP kinase family. IspE subfamily. In terms of assembly, homodimer.

It catalyses the reaction 4-CDP-2-C-methyl-D-erythritol + ATP = 4-CDP-2-C-methyl-D-erythritol 2-phosphate + ADP + H(+). It participates in isoprenoid biosynthesis; isopentenyl diphosphate biosynthesis via DXP pathway; isopentenyl diphosphate from 1-deoxy-D-xylulose 5-phosphate: step 3/6. Functionally, catalyzes the phosphorylation of the position 2 hydroxy group of 4-diphosphocytidyl-2C-methyl-D-erythritol. The polypeptide is 4-diphosphocytidyl-2-C-methyl-D-erythritol kinase (Yersinia pseudotuberculosis serotype O:3 (strain YPIII)).